We begin with the raw amino-acid sequence, 277 residues long: NADPH-dependent 7-cyano-7-deazaguanine reductase (277 aa).

Isoleucine 83–serine 85 is a binding site for substrate. An NADPH-binding site is contributed by serine 85–lysine 86. The active-site Thioimide intermediate is cysteine 184. Aspartate 191 (proton donor) is an active-site residue. Histidine 223–glutamate 224 lines the substrate pocket. Residue arginine 252–glycine 253 coordinates NADPH.

This sequence belongs to the GTP cyclohydrolase I family. QueF type 2 subfamily. In terms of assembly, homodimer.

The protein localises to the cytoplasm. The enzyme catalyses 7-aminomethyl-7-carbaguanine + 2 NADP(+) = 7-cyano-7-deazaguanine + 2 NADPH + 3 H(+). The protein operates within tRNA modification; tRNA-queuosine biosynthesis. In terms of biological role, catalyzes the NADPH-dependent reduction of 7-cyano-7-deazaguanine (preQ0) to 7-aminomethyl-7-deazaguanine (preQ1). The protein is NADPH-dependent 7-cyano-7-deazaguanine reductase of Cupriavidus pinatubonensis (strain JMP 134 / LMG 1197) (Cupriavidus necator (strain JMP 134)).